Here is a 63-residue protein sequence, read N- to C-terminus: Adipokinetic prohormone type 1 (63 aa).

Positions 1-22 (MVQRCLVVALLVVVVAAALCSA) are cleaved as a signal peptide. Q23 is subject to Pyrrolidone carboxylic acid. Residue T32 is modified to Threonine amide.

The protein belongs to the AKH/HRTH/RPCH family. As to quaternary structure, adipokinetic hormone precursor-related peptide (APRP) can form three type of disulfide-bond dimers: p1 (alpha-alpha), p2 (alpha-beta), and p3 (beta-beta).

It is found in the secreted. In terms of biological role, this hormone, released from cells in the corpora cardiaca, causes release of diglycerides from the fat body and stimulation of muscles to use these diglycerides as an energy source during energy-demanding processes. This is Adipokinetic prohormone type 1 from Schistocerca gregaria (Desert locust).